A 185-amino-acid chain; its full sequence is Photosystem I assembly protein Ycf4 (185 aa).

A run of 2 helical transmembrane segments spans residues 22 to 42 and 57 to 77; these read FFFASILFGGALGFFLVGFSS and IIFVPQGIVMCFYGIAGLFFS.

This sequence belongs to the Ycf4 family.

The protein localises to the plastid. It localises to the chloroplast thylakoid membrane. In terms of biological role, seems to be required for the assembly of the photosystem I complex. The sequence is that of Photosystem I assembly protein Ycf4 from Welwitschia mirabilis (Tree tumbo).